Reading from the N-terminus, the 598-residue chain is (-)-endo-fenchol synthase, chloroplastic (598 aa).

A chloroplast-targeting transit peptide spans 1 to 34 (MWSTISISMNVAILKKPLNFLHNSNNKASNPRCV). 5 residues coordinate Mg(2+): Asp351, Asp355, Asp495, Thr499, and Glu503. The DDXXD motif signature appears at 351 to 355 (DDVYD).

Belongs to the terpene synthase family. Mg(2+) serves as cofactor. It depends on Mn(2+) as a cofactor.

The protein resides in the plastid. It is found in the chloroplast. The enzyme catalyses (2E)-geranyl diphosphate + H2O = (1S,2S,4R)-endo-fenchol + diphosphate. Its pathway is secondary metabolite biosynthesis; terpenoid biosynthesis. Monoterpene synthase that catalyzes the formation of fenchol from geranyl diphosphate. The sequence is that of (-)-endo-fenchol synthase, chloroplastic (FES) from Ocimum basilicum (Sweet basil).